A 405-amino-acid polypeptide reads, in one-letter code: Nicotinate phosphoribosyltransferase (405 aa).

His-230 carries the post-translational modification Phosphohistidine; by autocatalysis.

This sequence belongs to the NAPRTase family. Transiently phosphorylated on a His residue during the reaction cycle. Phosphorylation strongly increases the affinity for substrates and increases the rate of nicotinate D-ribonucleotide production. Dephosphorylation regenerates the low-affinity form of the enzyme, leading to product release.

The enzyme catalyses nicotinate + 5-phospho-alpha-D-ribose 1-diphosphate + ATP + H2O = nicotinate beta-D-ribonucleotide + ADP + phosphate + diphosphate. It functions in the pathway cofactor biosynthesis; NAD(+) biosynthesis; nicotinate D-ribonucleotide from nicotinate: step 1/1. Functionally, catalyzes the synthesis of beta-nicotinate D-ribonucleotide from nicotinate and 5-phospho-D-ribose 1-phosphate at the expense of ATP. This is Nicotinate phosphoribosyltransferase from Bordetella pertussis (strain Tohama I / ATCC BAA-589 / NCTC 13251).